Consider the following 508-residue polypeptide: tRNA-2-methylthio-N(6)-dimethylallyladenosine synthase (508 aa).

A disordered region spans residues 1–21 (MNEEQRKASGQVSSSDKKSEK). Residues 65-183 (RKFYIRTYGC…LPELLSECYL (119 aa)) form the MTTase N-terminal domain. The [4Fe-4S] cluster site is built by Cys74, Cys110, Cys144, Cys220, Cys224, and Cys227. Positions 206–436 (RQGKIKGWVN…NALVNEISAK (231 aa)) constitute a Radical SAM core domain. A TRAM domain is found at 439–502 (KEYEGQTVEV…TWSLDGEMVG (64 aa)).

This sequence belongs to the methylthiotransferase family. MiaB subfamily. Monomer. Requires [4Fe-4S] cluster as cofactor.

The protein localises to the cytoplasm. The catalysed reaction is N(6)-dimethylallyladenosine(37) in tRNA + (sulfur carrier)-SH + AH2 + 2 S-adenosyl-L-methionine = 2-methylsulfanyl-N(6)-dimethylallyladenosine(37) in tRNA + (sulfur carrier)-H + 5'-deoxyadenosine + L-methionine + A + S-adenosyl-L-homocysteine + 2 H(+). Its function is as follows. Catalyzes the methylthiolation of N6-(dimethylallyl)adenosine (i(6)A), leading to the formation of 2-methylthio-N6-(dimethylallyl)adenosine (ms(2)i(6)A) at position 37 in tRNAs that read codons beginning with uridine. The protein is tRNA-2-methylthio-N(6)-dimethylallyladenosine synthase of Bacillus pumilus (strain SAFR-032).